Reading from the N-terminus, the 273-residue chain is Dermonecrotic toxin LhSicTox-alphaIA1i (273 aa).

Residue His-5 is part of the active site. The Mg(2+) site is built by Glu-25 and Asp-27. Residue His-41 is the Nucleophile of the active site. Disulfide bonds link Cys-45–Cys-51 and Cys-47–Cys-190. Asp-85 lines the Mg(2+) pocket.

The protein belongs to the arthropod phospholipase D family. Class II subfamily. It depends on Mg(2+) as a cofactor. As to expression, expressed by the venom gland.

Its subcellular location is the secreted. The catalysed reaction is an N-(acyl)-sphingosylphosphocholine = an N-(acyl)-sphingosyl-1,3-cyclic phosphate + choline. It carries out the reaction an N-(acyl)-sphingosylphosphoethanolamine = an N-(acyl)-sphingosyl-1,3-cyclic phosphate + ethanolamine. The enzyme catalyses a 1-acyl-sn-glycero-3-phosphocholine = a 1-acyl-sn-glycero-2,3-cyclic phosphate + choline. It catalyses the reaction a 1-acyl-sn-glycero-3-phosphoethanolamine = a 1-acyl-sn-glycero-2,3-cyclic phosphate + ethanolamine. Its function is as follows. Dermonecrotic toxins cleave the phosphodiester linkage between the phosphate and headgroup of certain phospholipids (sphingolipid and lysolipid substrates), forming an alcohol (often choline) and a cyclic phosphate. This toxin acts on sphingomyelin (SM). It may also act on ceramide phosphoethanolamine (CPE), lysophosphatidylcholine (LPC) and lysophosphatidylethanolamine (LPE), but not on lysophosphatidylserine (LPS), and lysophosphatidylglycerol (LPG). It acts by transphosphatidylation, releasing exclusively cyclic phosphate products as second products. Induces dermonecrosis, hemolysis, increased vascular permeability, edema, inflammatory response, and platelet aggregation. The polypeptide is Dermonecrotic toxin LhSicTox-alphaIA1i (Loxosceles hirsuta (Recluse spider)).